The following is a 418-amino-acid chain: D-amino acid dehydrogenase (418 aa).

3–17 lines the FAD pocket; it reads VTILGAGVVGVTSAW.

Belongs to the DadA oxidoreductase family. The cofactor is FAD.

The catalysed reaction is a D-alpha-amino acid + A + H2O = a 2-oxocarboxylate + AH2 + NH4(+). It functions in the pathway amino-acid degradation; D-alanine degradation; NH(3) and pyruvate from D-alanine: step 1/1. Oxidative deamination of D-amino acids. The protein is D-amino acid dehydrogenase of Agrobacterium fabrum (strain C58 / ATCC 33970) (Agrobacterium tumefaciens (strain C58)).